The primary structure comprises 320 residues: MKVLWAALLVAFLAGCQGKVEQVVEPELEPELEPHQQADWQSGQPWELALGRFWDYLRWVQTLSEQVQEELLSSQVTQELTALMEETMKELKAYKSELEEQLSPVAEETRARLSKELQAAQARLGADMEDVRSRLAQYRSEVQAMLGQSTDELRARLASHLRKLRKRLLRDVDDLQKRLAVYQAGAREGAERGVSAIRERLGTLVEQGRARAATVGSSLASQPLQERAQAWGERLRARMEEVGSRTRDRLDEVKEQVEEVRAKLEEQAQQMRLQAEAFQARLKSWFEPLVEDMQRQWAGLVEKVQAAVGASTTPVPSDNH.

The N-terminal stretch at methionine 1–glycine 18 is a signal peptide. 8 repeat units span residues alanine 82 to serine 103, proline 104 to glycine 125, alanine 126 to glycine 147, glutamine 148 to leucine 169, arginine 170 to glutamate 191, arginine 192 to alanine 213, threonine 214 to arginine 236, and alanine 237 to glutamate 258. The segment at alanine 82 to glutamate 258 is 8 X 22 AA approximate tandem repeats. A Methionine sulfoxide modification is found at methionine 145. The residue at position 149 (serine 149) is a Phosphoserine. Residues histidine 160–arginine 170 are LDL and other lipoprotein receptors binding. Heparin is bound at residue leucine 164–arginine 167. The lipid-binding and lipoprotein association stretch occupies residues alanine 212–methionine 293. An O-linked (GalNAc...) threonine glycan is attached at threonine 214. Glycine 232–methionine 239 contributes to the heparin binding site. The homooligomerization stretch occupies residues glutamine 269 to histidine 320. Positions arginine 281–methionine 293 are specificity for association with VLDL.

The protein belongs to the apolipoprotein A1/A4/E family. As to quaternary structure, homotetramer. May interact with ABCA1; functionally associated with ABCA1 in the biogenesis of HDLs. May interact with APP/A4 amyloid-beta peptide; the interaction is extremely stable in vitro but its physiological significance is unclear. May interact with MAPT. May interact with MAP2. In the cerebrospinal fluid, interacts with secreted SORL1. Interacts with PMEL; this allows the loading of PMEL luminal fragment on ILVs to induce fibril nucleation. In terms of processing, APOE exists as multiple glycosylated and sialylated glycoforms within cells and in plasma. The extent of glycosylation and sialylation are tissue and context specific. Glycated in plasma VLDL. Post-translationally, phosphorylated by FAM20C in the extracellular medium.

Its subcellular location is the secreted. The protein resides in the extracellular space. The protein localises to the extracellular matrix. It localises to the extracellular vesicle. It is found in the endosome. Its subcellular location is the multivesicular body. Functionally, APOE is an apolipoprotein, a protein associating with lipid particles, that mainly functions in lipoprotein-mediated lipid transport between organs via the plasma and interstitial fluids. APOE is a core component of plasma lipoproteins and is involved in their production, conversion and clearance. Apolipoproteins are amphipathic molecules that interact both with lipids of the lipoprotein particle core and the aqueous environment of the plasma. As such, APOE associates with chylomicrons, chylomicron remnants, very low density lipoproteins (VLDL) and intermediate density lipoproteins (IDL) but shows a preferential binding to high-density lipoproteins (HDL). It also binds a wide range of cellular receptors including the LDL receptor/LDLR, the LDL receptor-related proteins LRP1, LRP2 and LRP8 and the very low-density lipoprotein receptor/VLDLR that mediate the cellular uptake of the APOE-containing lipoprotein particles. Finally, APOE also has a heparin-binding activity and binds heparan-sulfate proteoglycans on the surface of cells, a property that supports the capture and the receptor-mediated uptake of APOE-containing lipoproteins by cells. A main function of APOE is to mediate lipoprotein clearance through the uptake of chylomicrons, VLDLs, and HDLs by hepatocytes. APOE is also involved in the biosynthesis by the liver of VLDLs as well as their uptake by peripheral tissues ensuring the delivery of triglycerides and energy storage in muscle, heart and adipose tissues. By participating in the lipoprotein-mediated distribution of lipids among tissues, APOE plays a critical role in plasma and tissues lipid homeostasis. APOE is also involved in two steps of reverse cholesterol transport, the HDLs-mediated transport of cholesterol from peripheral tissues to the liver, and thereby plays an important role in cholesterol homeostasis. First, it is functionally associated with ABCA1 in the biogenesis of HDLs in tissues. Second, it is enriched in circulating HDLs and mediates their uptake by hepatocytes. APOE also plays an important role in lipid transport in the central nervous system, regulating neuron survival and sprouting. The sequence is that of Apolipoprotein E (APOE) from Cebus capucinus (White-faced sapajou).